A 198-amino-acid chain; its full sequence is ATP-dependent Clp protease proteolytic subunit 2 (198 aa).

Catalysis depends on Ser94, which acts as the Nucleophile. The active site involves His119.

This sequence belongs to the peptidase S14 family. Fourteen ClpP subunits assemble into 2 heptameric rings which stack back to back to give a disk-like structure with a central cavity, resembling the structure of eukaryotic proteasomes.

Its subcellular location is the cytoplasm. It catalyses the reaction Hydrolysis of proteins to small peptides in the presence of ATP and magnesium. alpha-casein is the usual test substrate. In the absence of ATP, only oligopeptides shorter than five residues are hydrolyzed (such as succinyl-Leu-Tyr-|-NHMec, and Leu-Tyr-Leu-|-Tyr-Trp, in which cleavage of the -Tyr-|-Leu- and -Tyr-|-Trp bonds also occurs).. Functionally, cleaves peptides in various proteins in a process that requires ATP hydrolysis. Has a chymotrypsin-like activity. Plays a major role in the degradation of misfolded proteins. The polypeptide is ATP-dependent Clp protease proteolytic subunit 2 (Borreliella burgdorferi (strain ATCC 35210 / DSM 4680 / CIP 102532 / B31) (Borrelia burgdorferi)).